A 364-amino-acid chain; its full sequence is Aminomethyltransferase (364 aa).

The protein belongs to the GcvT family. As to quaternary structure, the glycine cleavage system is composed of four proteins: P, T, L and H.

It carries out the reaction N(6)-[(R)-S(8)-aminomethyldihydrolipoyl]-L-lysyl-[protein] + (6S)-5,6,7,8-tetrahydrofolate = N(6)-[(R)-dihydrolipoyl]-L-lysyl-[protein] + (6R)-5,10-methylene-5,6,7,8-tetrahydrofolate + NH4(+). Functionally, the glycine cleavage system catalyzes the degradation of glycine. This chain is Aminomethyltransferase, found in Shigella dysenteriae serotype 1 (strain Sd197).